Here is a 552-residue protein sequence, read N- to C-terminus: Putative transport protein HSM_0534 (552 aa).

Helical transmembrane passes span 4 to 24, 28 to 48, 67 to 87, 95 to 115, and 157 to 177; these read IAITICILALVAVIGLWIGHW, GVGLGIGGVLFGGIIVAHFMN, LILFVYTIGIQVGPGFFASLL, GLATLIVVLGAVSVFVLYKVV, and MAYAMAYPFGICGILLSMWLI. RCK C-terminal domains follow at residues 190-275 and 277-360; these read KQFQ…VIGE and IDMP…IIGN. A run of 6 helical transmembrane segments spans residues 370–390, 402–424, 438–458, 463–483, 495–515, and 529–549; these read MLPVFIGIGLGVLLGSIPFYI, AGGPLVVALILARIGSVGKLYWF, IVLFLAVVGLKSGGGFVDTLV, LEWMGYGMFITFIPLMITGII, LCGLLAGSMTDPPALAFANAI, and VYPLSMFLRIMSPQLLAILLW.

Belongs to the AAE transporter (TC 2.A.81) family. YidE subfamily.

Its subcellular location is the cell membrane. The polypeptide is Putative transport protein HSM_0534 (Histophilus somni (strain 2336) (Haemophilus somnus)).